Consider the following 88-residue polypeptide: MKSSHIALICIVMFSLFALHESRMEGGAIHRSMLNITIPPCIKTFCKVLTFEKHCWCCFGPRAKKKLCWNEQKYPNAKELCYAGCIIE.

Positions 1-22 (MKSSHIALICIVMFSLFALHES) are cleaved as a signal peptide. Disulfide bonds link C41/C57, C46/C85, C55/C81, and C58/C68.

Belongs to the MEG family. In terms of tissue distribution, expressed in leaves and flowers.

In Arabidopsis thaliana (Mouse-ear cress), this protein is EMBRYO SURROUNDING FACTOR 1-like protein 7 (ESFL7).